A 423-amino-acid chain; its full sequence is Lysosomal acid phosphatase (423 aa).

The N-terminal stretch at 1 to 30 is a signal peptide; that stretch reads MAGRRFGWSRAALLQLILGVNLMVMPRTQA. The Lumenal segment spans residues 31–380; that stretch reads RTLRFVTLLY…QLAGGPADTE (350 aa). His-42 functions as the Nucleophile in the catalytic mechanism. Residues Asn-92, Asn-133, Asn-167, Asn-177, Asn-191, and Asn-267 are each glycosylated (N-linked (GlcNAc...) asparagine). 3 cysteine pairs are disulfide-bonded: Cys-159–Cys-370, Cys-212–Cys-310, and Cys-345–Cys-349. The active-site Proton donor is Asp-287. Asn-322 and Asn-331 each carry an N-linked (GlcNAc...) asparagine glycan. The helical transmembrane segment at 381–401 threads the bilayer; that stretch reads VIVALAVCGSILFLLIVLLLT. The Cytoplasmic portion of the chain corresponds to 402-423; that stretch reads VLFRVQAQPPGYRHVPDGEDHA.

Belongs to the histidine acid phosphatase family. Post-translationally, the membrane-bound form is converted to the soluble form by sequential proteolytic processing. First, the C-terminal cytoplasmic tail is removed. Cleavage by a lysosomal protease releases the soluble form in the lysosome lumen.

Its subcellular location is the lysosome membrane. The protein resides in the lysosome lumen. It catalyses the reaction a phosphate monoester + H2O = an alcohol + phosphate. The polypeptide is Lysosomal acid phosphatase (ACP2) (Bos taurus (Bovine)).